A 140-amino-acid polypeptide reads, in one-letter code: Small ribosomal subunit protein uS12 (140 aa).

The residue at position 102 (aspartate 102) is a 3-methylthioaspartic acid.

This sequence belongs to the universal ribosomal protein uS12 family. As to quaternary structure, part of the 30S ribosomal subunit. Contacts proteins S8 and S17. May interact with IF1 in the 30S initiation complex.

Functionally, with S4 and S5 plays an important role in translational accuracy. Interacts with and stabilizes bases of the 16S rRNA that are involved in tRNA selection in the A site and with the mRNA backbone. Located at the interface of the 30S and 50S subunits, it traverses the body of the 30S subunit contacting proteins on the other side and probably holding the rRNA structure together. The combined cluster of proteins S8, S12 and S17 appears to hold together the shoulder and platform of the 30S subunit. In Bacillus anthracis (strain A0248), this protein is Small ribosomal subunit protein uS12.